The sequence spans 309 residues: MGAQFSKTAAKGEATAERPGEAAVASSPSKANGQENGHVKVNGDASPAAAEPGAKEELQANGSAPAADKEEPASGSAATPAAAEKDEAAAATEPGAGAADKEAAEAEPAEPSSPAAEAEGASASSTSSPKAEDGAAPSPSSETPKKKKKRFSFKKSFKLSGFSFKKSKKESGEGAEAEGATAEGAKDEAAAAAGGEGAAAPGEQAGGAGAEGAAGGEPREAEAAEPEQPEQPEQPAAEEPQAEEQSEAAGEKAEEPAPGATAGDASSAAGPEQEAPAATDEAAASAAPAASPEPQPECSPEAPPAPTAE.

A disordered region spans residues Met-1 to Glu-309. Gly-2 carries the N-myristoyl glycine lipid modification. Thr-15 is modified (phosphothreonine). Phosphoserine occurs at positions 26, 27, 29, 46, 63, and 74. Residues Ser-26 to Glu-35 are compositionally biased toward polar residues. Low complexity-rich tracts occupy residues Ala-73–Ala-82, Ala-89–Ala-98, and Ala-109–Glu-142. At Thr-79 the chain carries Phosphothreonine. Ser-113 carries the post-translational modification Phosphoserine; by MAPK. Residues Ser-122, Ser-128, Ser-138, Ser-140, and Ser-141 each carry the phosphoserine modification. Thr-143 carries the post-translational modification Phosphothreonine. Residues Lys-145–Phe-157 show a composition bias toward basic residues. Residues Lys-145–Lys-169 form a calmodulin-binding (PSD) region. Phosphoserine; by PKC occurs at positions 152 and 156. The residue at position 160 (Ser-160) is a Phosphoserine. Ser-163 carries the post-translational modification Phosphoserine; by PKC. An N6-acetyllysine modification is found at Lys-165. Ser-171 carries the phosphoserine modification. Positions Ala-190–Glu-203 are enriched in low complexity. Over residues Gln-204 to Gly-215 the composition is skewed to gly residues. Residue Ser-246 is modified to Phosphoserine. The segment covering Pro-256 to Ala-290 has biased composition (low complexity). Ser-291 is modified (phosphoserine). The segment covering Ser-291 to Glu-309 has biased composition (pro residues).

Belongs to the MARCKS family. Interacts with CDC42. Interacts with GTP-bound form of RAB10. Interacts with calmodulin/CALM1. Post-translationally, acetylated at Lys-165 by KAT5; acetylation is required for its subsequent phosphorylation. Deacetylated by SIRT2. In terms of processing, phosphorylation by PKC displaces MARCKS from the membrane. It also inhibits the F-actin cross-linking activity. PKC-mediated phosphorylation increases 4 to 5-fold upon TNF-alpha or LPS induction. Myristoylated. A proper myristoylation is essential for the proper distribution to the plasma membrane. Post-translationally, phosphorylation by PKC displaces MARCKS from the membrane. It also inhibits the F-actin cross-linking activity. In terms of tissue distribution, brain, spleen, less in kidney and heart, and very low levels in liver.

It localises to the cell membrane. It is found in the cytoplasm. Its subcellular location is the cytoskeleton. Membrane-associated protein that plays a role in the structural modulation of the actin cytoskeleton, chemotaxis, motility, cell adhesion, phagocytosis, and exocytosis through lipid sequestering and/or protein docking to membranes. Thus, exerts an influence on a plethora of physiological processes, such as embryonic development, tissue regeneration, neuronal plasticity, and inflammation. Sequesters phosphatidylinositol 4,5-bisphosphate (PIP2) at lipid rafts in the plasma membrane of quiescent cells, an action reversed by protein kinase C, ultimately inhibiting exocytosis. During inflammation, promotes the migration of inflammatory cells and the secretion of cytokines such as tumor necrosis factor (TNF), particularly in macrophages. Plays an essential role in bacteria-induced intracellular reactive oxygen species (ROS) formation in the monocytic cell type. Participates in the regulation of neurite initiation and outgrowth by interacting with components of cellular machinery including CDC42 that regulates cell shape and process extension through modulation of the cytoskeleton. Also plays a role in axon development by mediating docking and fusion of RAB10-positive vesicles with the plasma membrane. This is Myristoylated alanine-rich C-kinase substrate (Marcks) from Mus musculus (Mouse).